The chain runs to 200 residues: 3-isopropylmalate dehydratase small subunit (200 aa).

This sequence belongs to the LeuD family. LeuD type 1 subfamily. In terms of assembly, heterodimer of LeuC and LeuD.

The catalysed reaction is (2R,3S)-3-isopropylmalate = (2S)-2-isopropylmalate. Its pathway is amino-acid biosynthesis; L-leucine biosynthesis; L-leucine from 3-methyl-2-oxobutanoate: step 2/4. Functionally, catalyzes the isomerization between 2-isopropylmalate and 3-isopropylmalate, via the formation of 2-isopropylmaleate. The protein is 3-isopropylmalate dehydratase small subunit of Erythrobacter litoralis (strain HTCC2594).